Here is a 615-residue protein sequence, read N- to C-terminus: 1-deoxy-D-xylulose-5-phosphate synthase (615 aa).

Thiamine diphosphate-binding positions include His-76 and 117-119 (GHS). Asp-148 provides a ligand contact to Mg(2+). Residues 149–150 (GA), Asn-177, Tyr-284, and Glu-365 each bind thiamine diphosphate. Asn-177 is a binding site for Mg(2+).

It belongs to the transketolase family. DXPS subfamily. As to quaternary structure, homodimer. Mg(2+) is required as a cofactor. It depends on thiamine diphosphate as a cofactor.

It catalyses the reaction D-glyceraldehyde 3-phosphate + pyruvate + H(+) = 1-deoxy-D-xylulose 5-phosphate + CO2. Its pathway is metabolic intermediate biosynthesis; 1-deoxy-D-xylulose 5-phosphate biosynthesis; 1-deoxy-D-xylulose 5-phosphate from D-glyceraldehyde 3-phosphate and pyruvate: step 1/1. Catalyzes the acyloin condensation reaction between C atoms 2 and 3 of pyruvate and glyceraldehyde 3-phosphate to yield 1-deoxy-D-xylulose-5-phosphate (DXP). In Francisella tularensis subsp. novicida (strain U112), this protein is 1-deoxy-D-xylulose-5-phosphate synthase.